The sequence spans 249 residues: 5'-nucleotidase SurE (249 aa).

Residues Asp-9, Asp-10, Ser-40, and Asn-92 each contribute to the a divalent metal cation site.

The protein belongs to the SurE nucleotidase family. A divalent metal cation serves as cofactor.

The protein resides in the cytoplasm. The enzyme catalyses a ribonucleoside 5'-phosphate + H2O = a ribonucleoside + phosphate. Nucleotidase that shows phosphatase activity on nucleoside 5'-monophosphates. This Shewanella frigidimarina (strain NCIMB 400) protein is 5'-nucleotidase SurE.